The chain runs to 259 residues: Type III pantothenate kinase (259 aa).

ATP is bound at residue 6-13; sequence DCGNTNTV. 107–110 serves as a coordination point for substrate; the sequence is GPDR. Asp109 (proton acceptor) is an active-site residue. Asp129 serves as a coordination point for K(+). Thr132 contacts ATP. Thr184 provides a ligand contact to substrate.

This sequence belongs to the type III pantothenate kinase family. As to quaternary structure, homodimer. The cofactor is NH4(+). Requires K(+) as cofactor.

It is found in the cytoplasm. The catalysed reaction is (R)-pantothenate + ATP = (R)-4'-phosphopantothenate + ADP + H(+). It participates in cofactor biosynthesis; coenzyme A biosynthesis; CoA from (R)-pantothenate: step 1/5. In terms of biological role, catalyzes the phosphorylation of pantothenate (Pan), the first step in CoA biosynthesis. The sequence is that of Type III pantothenate kinase from Ruegeria pomeroyi (strain ATCC 700808 / DSM 15171 / DSS-3) (Silicibacter pomeroyi).